An 827-amino-acid chain; its full sequence is Histone acetyltransferase MOF (827 aa).

Disordered stretches follow at residues 1–190, 237–276, 288–309, and 324–360; these read MSEA…SDTV, QLGL…AVYL, STPG…MPPP, and EAIS…TSRE. The span at 19–30 shows a compositional bias: acidic residues; that stretch reads PIEEEHEPEQEP. Positions 55 to 69 are enriched in polar residues; it reads LDVSGSDQSAEQSLD. Over residues 103–116 the composition is skewed to low complexity; sequence SSTSTSSTRSSSSS. Positions 121-133 are enriched in acidic residues; the sequence is VSEAEEAPPEPEP. The segment covering 141–150 has biased composition (basic and acidic residues); it reads QEEKKEDGQD. Over residues 176 to 186 the composition is skewed to acidic residues; sequence DQEIETEDEPS. A compositionally biased stretch (pro residues) spans 243 to 253; it reads AAPPPPPPPPA. Positions 326–350 are enriched in acidic residues; it reads ISDDSSETSSSDDDEEEEEDEDDAL. Lys372 participates in a covalent cross-link: Glycyl lysine isopeptide (Lys-Gly) (interchain with G-Cter in ubiquitin). The Tudor-knot domain occupies 382–433; the sequence is IYFIRREDGTVHRGQVLQSRTTENAAAPDEYYVHYVGLNRRLDGWVGRHRIS. Residues Lys483, Lys532, and Lys539 each participate in a glycyl lysine isopeptide (Lys-Gly) (interchain with G-Cter in ubiquitin) cross-link. Residues 538–813 enclose the MYST-type HAT domain; the sequence is TKIKYIDKLQ…IDTDYLVWSP (276 aa). A C2HC MYST-type zinc finger spans residues 571-596; the sequence is LYVCEYCLKYMRFRSSYAYHLHECDR. Residues Cys574, Cys577, His590, and Cys594 each contribute to the Zn(2+) site. Lys638 is modified (N6-acetyllysine; by autocatalysis). Acetyl-CoA contacts are provided by Ile681, Arg689, Lys690, Gly691, Gly693, and Lys694. Glu714 acts as the Proton donor/acceptor in catalysis. Lys715 participates in a covalent cross-link: Glycyl lysine isopeptide (Lys-Gly) (interchain with G-Cter in ubiquitin). Ser718 and Ser727 together coordinate acetyl-CoA. Lys749 participates in a covalent cross-link: Glycyl lysine isopeptide (Lys-Gly) (interchain with G-Cter in ubiquitin). Tyr774 is a binding site for acetyl-CoA. Glycyl lysine isopeptide (Lys-Gly) (interchain with G-Cter in ubiquitin) cross-links involve residues Lys776, Lys798, and Lys801. Lys798 contacts acetyl-CoA.

It belongs to the MYST (SAS/MOZ) family. As to quaternary structure, component of the male-specific lethal (MSL) histone acetyltransferase complex, composed of mof, mle, msl-1, msl-2 and msl-3 proteins, as well as roX1 and roX2 non-coding RNAs. Component of a maternal MSL subcomplex composed of mof, msl-1 and msl-3. Component of the non-specific lethal (NLS) histone acetyltransferase complex at least composed of mof, nls1, dgt1/NSL2, Rcd1/NSL3, Rcd5/MCRS2, MBD-R2 and wds. In males, interacts with nucleoporin Mgtor. In terms of processing, autoacetylation at Lys-638 is required for binding histone H4 with high affinity and for proper function. Post-translationally, ubiquitinated by msl-2.

It localises to the nucleus. The protein localises to the chromosome. It carries out the reaction L-lysyl-[histone] + acetyl-CoA = N(6)-acetyl-L-lysyl-[histone] + CoA + H(+). Functionally, histone acetyltransferase that catalyzes the formation of the majority of histone H4 acetylation at 'Lys-16' (H4K16ac), an epigenetic mark that prevents chromatin compaction and constitutes the only acetylation mark intergenerationally transmitted. Catalytic component of the male-specific lethal (MSL) complex, a multiprotein complex essential for elevating transcription of the single X chromosome in the male (X chromosome dosage compensation). The MSL complex specifically associates with the single X chromosome in males and mediates formation of H4K16ac, promoting a two-fold activation of X chromosome. Dosage compensation ensures that males with a single X chromosome have the same amount of most X-linked gene products as females with two X chromosomes. In oocytes, mof is also part of a maternal MSL subcomplex that mediates H4K16ac deposition for intergenerational transmission: H4K16ac prepares the chromatin landscape for establishment of nucleosome accessibility and poises genes for future activation. H4K16ac constitutes the only acetylation mark maintained from oocytes to fertilized embryos. Mof also constitutes the catalytic component of the non-specific lethal (NLS) complex, which promotes expression of housekeeping genes on X chromosome and autosomes. The NSL complex promotes strong expression of housekeeping genes compared to the two-fold expression mediated by the MSL complex on X chromosome, suggesting that the activation potential of mof is constrained in the context of dosage compensation. The chain is Histone acetyltransferase MOF from Drosophila melanogaster (Fruit fly).